The primary structure comprises 150 residues: Catabolic 3-dehydroquinase 2 (150 aa).

Tyrosine 23 functions as the Proton acceptor in the catalytic mechanism. 3 residues coordinate substrate: asparagine 74, histidine 80, and aspartate 87. The active-site Proton donor is histidine 100. Substrate-binding positions include 101–102 (IT) and arginine 111.

The protein belongs to the type-II 3-dehydroquinase family. In terms of assembly, homododecamer. Adopts a ring-like structure, composed of an arrangement of two hexameric rings stacked on top of one another.

It carries out the reaction 3-dehydroquinate = 3-dehydroshikimate + H2O. The protein operates within aromatic compound metabolism; 3,4-dihydroxybenzoate biosynthesis; 3,4-dihydroxybenzoate from 3-dehydroquinate: step 1/2. Is involved in the catabolism of quinate. Allows the utilization of quinate as carbon source via the beta-ketoadipate pathway. This Aspergillus fumigatus (strain ATCC MYA-4609 / CBS 101355 / FGSC A1100 / Af293) (Neosartorya fumigata) protein is Catabolic 3-dehydroquinase 2.